A 207-amino-acid polypeptide reads, in one-letter code: Small ribosomal subunit protein uS4 (207 aa).

Positions 32-55 are disordered; the sequence is CKLDSKPGQHGRTSGARTSDYGTQ. Residues 42–53 are compositionally biased toward polar residues; that stretch reads GRTSGARTSDYG. The 62-residue stretch at 97 to 158 folds into the S4 RNA-binding domain; the sequence is SRLDNVVYRM…TKKKQARILE (62 aa).

It belongs to the universal ribosomal protein uS4 family. Part of the 30S ribosomal subunit. Contacts protein S5. The interaction surface between S4 and S5 is involved in control of translational fidelity.

In terms of biological role, one of the primary rRNA binding proteins, it binds directly to 16S rRNA where it nucleates assembly of the body of the 30S subunit. Functionally, with S5 and S12 plays an important role in translational accuracy. The sequence is that of Small ribosomal subunit protein uS4 from Paraburkholderia phytofirmans (strain DSM 17436 / LMG 22146 / PsJN) (Burkholderia phytofirmans).